We begin with the raw amino-acid sequence, 367 residues long: Probable butyrate kinase (367 aa).

It belongs to the acetokinase family.

It is found in the cytoplasm. The enzyme catalyses butanoate + ATP = butanoyl phosphate + ADP. The protein is Probable butyrate kinase of Bacillus cereus (strain ATCC 14579 / DSM 31 / CCUG 7414 / JCM 2152 / NBRC 15305 / NCIMB 9373 / NCTC 2599 / NRRL B-3711).